Here is a 21-residue protein sequence, read N- to C-terminus: Endo-1,4-beta-xylanase A (21 aa).

The protein belongs to the glycosyl hydrolase 10 (cellulase F) family.

The catalysed reaction is Endohydrolysis of (1-&gt;4)-beta-D-xylosidic linkages in xylans.. Its pathway is glycan degradation; xylan degradation. The sequence is that of Endo-1,4-beta-xylanase A from Dictyoglomus sp. (strain B4A).